The following is a 436-amino-acid chain: Prenyltransferase nscD (436 aa).

The protein belongs to the tryptophan dimethylallyltransferase family.

It functions in the pathway secondary metabolite biosynthesis. Prenyltransferase; part of the gene cluster that mediates the biosynthesis of neosartoricin B, a prenylated anthracenone that probably exhibits T-cell antiproliferative activity, suggestive of a physiological role as an immunosuppressive agent. The non-reducing polyketide synthase nscA probably synthesizes and cyclizes the decaketide backbone. The hydrolase nscB then mediates the product release through hydrolysis followed by spontaneous decarboxylation. The prenyltransferase nscD catalyzes the addition of the dimethylallyl group to the aromatic C5. The FAD-dependent monooxygenase nscC is then responsible for the stereospecific hydroxylation at C2. Neosartoricin B can be converted into two additional compounds neosartoricins C and D. Neosartoricin C is a spirocyclic compound that is cyclized through the attack of C3 hydroxyl on C14, followed by dehydration. On the other hand, neosartoricin D is a further cyclized compound in which attack of C2 on C14 in neosartoricin C results in the formation of the acetal-containing dioxabicyclo-octanone ring. Both of these compounds are novel and possibly represent related metabolites of the gene cluster. In Arthroderma benhamiae (strain ATCC MYA-4681 / CBS 112371) (Trichophyton mentagrophytes), this protein is Prenyltransferase nscD.